We begin with the raw amino-acid sequence, 224 residues long: MAKSGKKYLQALSKVNKLKSYNIDDAISLLKEIKFVKFDETIDVSVNLNLKKNHTVRETLVLPHQFMKEKRILVFAKGEKAEEAREFGAAYVGDDDLINKIKDGFSDFDVVVATPDMMKDVGKLGPILGKRGLMPNPKTQTITNDLKGTIASLKKGRTEFRANKNGVINFSVGKSSMDSKKIRENYDEFIKELLKRRPSDLKGTFVDSVYVSSTMGPSVKIDFV.

It belongs to the universal ribosomal protein uL1 family. As to quaternary structure, part of the 50S ribosomal subunit.

Its function is as follows. Binds directly to 23S rRNA. The L1 stalk is quite mobile in the ribosome, and is involved in E site tRNA release. Protein L1 is also a translational repressor protein, it controls the translation of the L11 operon by binding to its mRNA. This chain is Large ribosomal subunit protein uL1, found in Borrelia duttonii (strain Ly).